Here is a 159-residue protein sequence, read N- to C-terminus: Phosphopantetheine adenylyltransferase (159 aa).

Serine 8 is a substrate binding site. Residues 8–9 and histidine 16 each bind ATP; that span reads SF. Substrate contacts are provided by lysine 40, threonine 72, and arginine 86. Residues 87–89, glutamate 97, and 122–128 each bind ATP; these read GLR and HSFVSSS.

It belongs to the bacterial CoaD family. In terms of assembly, homohexamer. Mg(2+) is required as a cofactor.

It is found in the cytoplasm. The catalysed reaction is (R)-4'-phosphopantetheine + ATP + H(+) = 3'-dephospho-CoA + diphosphate. The protein operates within cofactor biosynthesis; coenzyme A biosynthesis; CoA from (R)-pantothenate: step 4/5. In terms of biological role, reversibly transfers an adenylyl group from ATP to 4'-phosphopantetheine, yielding dephospho-CoA (dPCoA) and pyrophosphate. This is Phosphopantetheine adenylyltransferase from Synechococcus sp. (strain JA-2-3B'a(2-13)) (Cyanobacteria bacterium Yellowstone B-Prime).